We begin with the raw amino-acid sequence, 2737 residues long: Non-reducing polyketide synthase ATEG_07661 (2737 aa).

The N-terminal acylcarrier protein transacylase domain (SAT) stretch occupies residues 75 to 245; the sequence is SRSLAELDSW…VRYDQTRATV (171 aa). Cys-154 functions as the Nucleophile; for transacylase activity in the catalytic mechanism. His-276 (proton donor/acceptor; for transacylase activity) is an active-site residue. The 428-residue stretch at 427 to 854 folds into the Ketosynthase family 3 (KS3) domain; the sequence is NEAIAIVGMS…GSNASMIITE (428 aa). Residues Cys-603, His-738, and His-777 each act as for beta-ketoacyl synthase activity in the active site. The segment at 969 to 1260 is malonyl-CoA:ACP transacylase (MAT); it reads FGGQVSRFVG…IMASRAIAQS (292 aa). Positions 1368–1503 are N-terminal hotdog fold; it reads LQSLWNFVEF…ASVEMRAPTD (136 aa). A PKS/mFAS DH domain is found at 1368-1683; sequence LQSLWNFVEF…YGRVAKASMS (316 aa). The product template (PT) domain stretch occupies residues 1399 to 1681; sequence FVLSHVIAQT…VQYGRVAKAS (283 aa). The active-site Proton acceptor; for dehydratase activity is His-1403. The C-terminal hotdog fold stretch occupies residues 1535-1683; sequence VEVLQGRNVY…YGRVAKASMS (149 aa). Asp-1592 (proton donor; for dehydratase activity) is an active-site residue. The tract at residues 1724–1747 is disordered; the sequence is SRTTKKKAKASKSKSSVKKDKAPS. Over residues 1725-1739 the composition is skewed to basic residues; sequence RTTKKKAKASKSKSS. One can recognise a Carrier domain in the interval 1750–1824; that stretch reads RDITDEVRNL…KFVACVSNAL (75 aa). Ser-1784 carries the O-(pantetheine 4'-phosphoryl)serine modification. Residues 1827–1876 are disordered; that stretch reads PNQGQSSIDEDDEDDEHSEDSSNESSSAASDEDASSGLESPDTGILTPED. A compositionally biased stretch (acidic residues) spans 1834–1848; the sequence is IDEDDEDDEHSEDSS. The span at 1849–1866 shows a compositional bias: low complexity; the sequence is NESSSAASDEDASSGLES. The methyltransferase domain stretch occupies residues 2094–2270; the sequence is ADRIQSSSGS…GFGHVDWTDG (177 aa). An NADPH-binding domain region spans residues 2362-2665; that stretch reads VVLVTGATGS…IPFKDWISRV (304 aa).

The protein operates within secondary metabolite biosynthesis. Non-reducing polyketide synthase; part of the cluster B that mediates the biosynthesis of azasperpyranones, members of the azaphilone family that exhibit anti-cancer activities. Azasperpyranones are synthesized by 2 clusters, A and B. Cluster A is responsible for the production of the polyhydric phenol moiety while the azaphilonoid scaffold is produced by the cluster B. The non-reducing polyketide synthase ATEG_03629 produces 5-methyl orsellinic acid, which is then reduced to 5-methyl orsellinic aldehyde by the NRPS-like protein ATEG_03630. 5-methyl orsellinic aldehyde is then first hydroxylated by the FAD-dependent monooxygenase ATEG_03635 and subsequently hydroxylated by the cytochrome P450 monooxygenase ATEG_03631 to produce the unstable polyhydric phenol precursor of azasperpyranones. On the other hand, the polyketide synthase ATEG_07659 is responsible for producing the 3,5-dimethyloctadienone moiety from acetyl-CoA, three malonyl-CoA, and two S-adenosyl methionines (SAM). The 3,5-dimethyloctadienone moiety is then loaded onto the SAT domain of ATEG_07661 and extended with four malonyl-CoA and one SAM, which leads to the formation of 2,4-dihydroxy-6-(5,7-dimethyl-2-oxo-trans-3-trans-5-nonadienyl)-3-methylbenzaldehyde (compound 8) after reductive release and aldol condensation. The FAD-dependent monooxygenase ATEG_07662 is the next enzyme in the biosynthesis sequence and hydroxylates the side chain at the benzylic position of compound 8. In Aspergillus nidulans, afoF, the ortholog of the FAD-dependent oxygenase ATEG_07660, is the key enzyme for the biosynthesis of asperfuranone by catalyzing the hydroxylation at C-8 of to prevent the formation of a six-membered ring hemiacetal intermediate and thus facilitating the formation of a five-membered ring to produce asperfuranone. In Aspergillus terreus, ATEG_07660 is probably not functional, which leads to the formation of the six-membered ring hemiacetal intermediate presperpyranone instead of asperfuranone. Finally, ATEG_03636 is involved in the condensation of the polyhydric phenol moiety produced by cluster A and the perasperpyranone precursor produced by cluster B, to yield azasperpyranone A. Further modifications of azasperpyranone A result in the production of derivatives, including azasperpyranone B to F. The polypeptide is Non-reducing polyketide synthase ATEG_07661 (Aspergillus terreus (strain NIH 2624 / FGSC A1156)).